We begin with the raw amino-acid sequence, 96 residues long: Small ribosomal subunit protein bS6 (96 aa).

It belongs to the bacterial ribosomal protein bS6 family.

Binds together with bS18 to 16S ribosomal RNA. This is Small ribosomal subunit protein bS6 from Nocardioides sp. (strain ATCC BAA-499 / JS614).